The primary structure comprises 450 residues: Asparagine--tRNA ligase (450 aa).

The protein belongs to the class-II aminoacyl-tRNA synthetase family. As to quaternary structure, homodimer.

Its subcellular location is the cytoplasm. It catalyses the reaction tRNA(Asn) + L-asparagine + ATP = L-asparaginyl-tRNA(Asn) + AMP + diphosphate + H(+). The sequence is that of Asparagine--tRNA ligase from Metamycoplasma arthritidis (strain 158L3-1) (Mycoplasma arthritidis).